Here is a 217-residue protein sequence, read N- to C-terminus: ATP phosphoribosyltransferase (217 aa).

The protein belongs to the ATP phosphoribosyltransferase family. Short subfamily. In terms of assembly, heteromultimer composed of HisG and HisZ subunits.

The protein resides in the cytoplasm. The catalysed reaction is 1-(5-phospho-beta-D-ribosyl)-ATP + diphosphate = 5-phospho-alpha-D-ribose 1-diphosphate + ATP. The protein operates within amino-acid biosynthesis; L-histidine biosynthesis; L-histidine from 5-phospho-alpha-D-ribose 1-diphosphate: step 1/9. In terms of biological role, catalyzes the condensation of ATP and 5-phosphoribose 1-diphosphate to form N'-(5'-phosphoribosyl)-ATP (PR-ATP). Has a crucial role in the pathway because the rate of histidine biosynthesis seems to be controlled primarily by regulation of HisG enzymatic activity. The sequence is that of ATP phosphoribosyltransferase from Burkholderia orbicola (strain MC0-3).